The primary structure comprises 268 residues: Zinc finger protein SNAI2 (268 aa).

The interval 1–20 is SNAG domain; sequence MPRSFLVKKHFNASKKPNYS. The disordered stretch occupies residues 80–117; that stretch reads PASLGRVSPPPPSDTSSKDHSGSESPISDEEERLQSKL. 4 consecutive C2H2-type zinc fingers follow at residues 128–150, 159–181, 185–207, and 213–235; these read FQCN…KQLH, FSCK…IRTH, CVCK…IRTH, and FSCS…LQTH. The segment at 241 to 264 adopts a C2H2-type 5; atypical zinc-finger fold; that stretch reads YQCKSCSKTFSRMSLLHKHEESGC.

This sequence belongs to the snail C2H2-type zinc-finger protein family. Interacts (via SNAG domain) with LIMD1 (via LIM domains), WTIP (via LIM domains) and AJUBA (via LIM domains). Interacts (via zinc fingers) with KPNA2, KPNB1, and TNPO1. May interact (via zinc fingers) with IPO7. Phosphorylated by GSK3B. Once phosphorylated, it becomes a target for ubiquitination. In terms of processing, ubiquitinated by the SCF(FBXO11) complex; ubiquitination requires previous GSK3B-mediated SNAI2 phosphorylation.

The protein resides in the nucleus. Its subcellular location is the cytoplasm. Its function is as follows. Transcriptional repressor that modulates both activator-dependent and basal transcription. Involved in the generation and migration of neural crest cells. Plays a role in mediating RAF1-induced transcriptional repression of the TJ protein, occludin (OCLN) and subsequent oncogenic transformation of epithelial cells. Represses BRCA2 expression by binding to its E2-box-containing silencer and recruiting CTBP1 and HDAC1 in breast cells. In epidermal keratinocytes, binds to the E-box in ITGA3 promoter and represses its transcription. Involved in the regulation of ITGB1 and ITGB4 expression and cell adhesion and proliferation in epidermal keratinocytes. Binds to E-box2 domain of BSG and activates its expression during TGFB1-induced epithelial-mesenchymal transition (EMT) in hepatocytes. Represses E-Cadherin/CDH1 transcription via E-box elements. Involved in osteoblast maturation. Binds to RUNX2 and SOC9 promoters and may act as a positive and negative transcription regulator, respectively, in osteoblasts. Binds to CXCL12 promoter via E-box regions in mesenchymal stem cells and osteoblasts. Plays an essential role in TWIST1-induced EMT and its ability to promote invasion and metastasis. This Bos taurus (Bovine) protein is Zinc finger protein SNAI2 (SNAI2).